A 442-amino-acid chain; its full sequence is tRNA-2-methylthio-N(6)-dimethylallyladenosine synthase (442 aa).

Residues 6–122 (RKFYIHTFGC…LPALIAEAGD (117 aa)) form the MTTase N-terminal domain. [4Fe-4S] cluster contacts are provided by cysteine 15, cysteine 51, cysteine 85, cysteine 157, cysteine 161, and cysteine 164. Residues 143-373 (RTQSLNAFVP…IDLQNGISAE (231 aa)) form the Radical SAM core domain. Residues 376 to 439 (GLAPGSVVEV…SATLFGQSAE (64 aa)) form the TRAM domain.

Belongs to the methylthiotransferase family. MiaB subfamily. Monomer. It depends on [4Fe-4S] cluster as a cofactor.

Its subcellular location is the cytoplasm. The enzyme catalyses N(6)-dimethylallyladenosine(37) in tRNA + (sulfur carrier)-SH + AH2 + 2 S-adenosyl-L-methionine = 2-methylsulfanyl-N(6)-dimethylallyladenosine(37) in tRNA + (sulfur carrier)-H + 5'-deoxyadenosine + L-methionine + A + S-adenosyl-L-homocysteine + 2 H(+). Catalyzes the methylthiolation of N6-(dimethylallyl)adenosine (i(6)A), leading to the formation of 2-methylthio-N6-(dimethylallyl)adenosine (ms(2)i(6)A) at position 37 in tRNAs that read codons beginning with uridine. This is tRNA-2-methylthio-N(6)-dimethylallyladenosine synthase from Chlorobium phaeobacteroides (strain DSM 266 / SMG 266 / 2430).